Consider the following 501-residue polypeptide: Bifunctional purine biosynthesis protein PurH (501 aa).

The MGS-like domain maps to 1–144 (MKKRALISVF…KNFKDVVVLS (144 aa)).

This sequence belongs to the PurH family.

The catalysed reaction is (6R)-10-formyltetrahydrofolate + 5-amino-1-(5-phospho-beta-D-ribosyl)imidazole-4-carboxamide = 5-formamido-1-(5-phospho-D-ribosyl)imidazole-4-carboxamide + (6S)-5,6,7,8-tetrahydrofolate. The enzyme catalyses IMP + H2O = 5-formamido-1-(5-phospho-D-ribosyl)imidazole-4-carboxamide. The protein operates within purine metabolism; IMP biosynthesis via de novo pathway; 5-formamido-1-(5-phospho-D-ribosyl)imidazole-4-carboxamide from 5-amino-1-(5-phospho-D-ribosyl)imidazole-4-carboxamide (10-formyl THF route): step 1/1. Its pathway is purine metabolism; IMP biosynthesis via de novo pathway; IMP from 5-formamido-1-(5-phospho-D-ribosyl)imidazole-4-carboxamide: step 1/1. The protein is Bifunctional purine biosynthesis protein PurH of Clostridium perfringens (strain 13 / Type A).